A 134-amino-acid chain; its full sequence is Putative thioredoxin 2 (134 aa).

A Thioredoxin domain is found at 3–106 (STVELTKENF…LTDVIGQARK (104 aa)). C31 and C34 are joined by a disulfide. A disordered region spans residues 115 to 134 (AVAEQQAQAGQNGQEGQEGQ). Low complexity predominate over residues 117-134 (AEQQAQAGQNGQEGQEGQ).

The protein belongs to the thioredoxin family.

The protein resides in the cytoplasm. In terms of biological role, component of the thioredoxin-thioredoxin reductase system. Participates in various redox reactions through the reversible oxidation of its active center dithiol to a disulfide and catalyzes dithiol-disulfide exchange reactions. The protein is Putative thioredoxin 2 (trxC) of Streptomyces coelicolor (strain ATCC BAA-471 / A3(2) / M145).